We begin with the raw amino-acid sequence, 453 residues long: O-glucose prenyltransferase PaPT (453 aa).

95 to 96 provides a ligand contact to L-tryptophan; the sequence is AP. Positions 210, 212, 279, 281, 283, 368, and 435 each coordinate substrate.

The protein belongs to the tryptophan dimethylallyltransferase family.

The protein operates within mycotoxin biosynthesis. Functionally, O-glucose prenyltransferase; part of the 2 gene clusters that mediate the biosynthesis of fusicoccins, diterpene glucosides that display phytohormone-like activity and function as potent activators of plasma membrane H(+)-ATPases in plants by modifying 14-3-3 proteins and cause the plant disease constriction canker. The first step in the pathway is performed by the fusicoccadiene synthase PaFS that possesses both prenyl transferase and terpene cyclase activity, converting isopentenyl diphosphate and dimethylallyl diphosphate into geranylgeranyl diphosphate (GGDP) and successively converting GGDP into fusicocca-2,10(14)-diene, a precursor for fusicoccin H. The second step is the oxidation at the C-8 position by the cytochrome P450 monooxygenase PaP450-2 to yield fusicocca-2,10(14)-diene-8-beta-ol. The cytochrome P450 monooxygenase PaP450-1 then catalyzes the hydroxylation at the C-16 position to produce fusicocca-2,10(14)-diene-8-beta,16-diol. The dioxygenase fc-dox then catalyzes the 16-oxydation of fusicocca-2,10(14)-diene-8-beta,16-diol to yield an aldehyde (8-beta-hydroxyfusicocca-1,10(14)-dien-16-al). The short-chain dehydrogenase/reductase fc-sdr catalyzes the reduction of the aldehyde to yield fusicocca-1,10(14)-diene-8-beta,16-diol. The next step is the hydroxylation at C-9 performed by the cytochrome P450 monooxygenase PaP450-3 that leads to fusicoccin H aglycon which is glycosylated to fusicoccin H by the O-glycosyltransferase PaGT. Hydroxylation at C-12 by the cytochrome P450 monooxygenase PaP450-4 leads then to the production of fusicoccin Q and is followed by methylation by the O-methyltransferase PaMT to yield fusicoccin P. Fusicoccin P is further converted to fusicoccin J via prenylation by the O-glucose prenyltransferase PaPT. Cytochrome P450 monooxygenase PaP450-5 then performs hydroxylation at C-19 to yield dideacetyl-fusicoccin A which is acetylated to 3'-O-deacetyl-fusicoccin A by the O-acetyltransferase PaAT-2. Finally, a another acetylation by the O-acetyltransferase PaAT-1 yields fusicoccin A. This Phomopsis amygdali (Fusicoccum amygdali) protein is O-glucose prenyltransferase PaPT.